The following is a 557-amino-acid chain: Probable protein kinase UbiB (557 aa).

Residues 121–509 form the Protein kinase domain; the sequence is SFDTVPLASA…RKLQTRVVTA (389 aa). ATP contacts are provided by residues 127–135 and Lys154; that span reads LASASIAQV. Asp289 serves as the catalytic Proton acceptor. The next 2 membrane-spanning stretches (helical) occupy residues 506 to 526 and 535 to 555; these read VVTA…YGLH and VPVW…VAWL.

This sequence belongs to the ABC1 family. UbiB subfamily.

The protein resides in the cell inner membrane. It functions in the pathway cofactor biosynthesis; ubiquinone biosynthesis [regulation]. Is probably a protein kinase regulator of UbiI activity which is involved in aerobic coenzyme Q (ubiquinone) biosynthesis. The protein is Probable protein kinase UbiB of Xanthomonas oryzae pv. oryzae (strain MAFF 311018).